We begin with the raw amino-acid sequence, 430 residues long: Bone morphogenetic protein 7 (430 aa).

An N-terminal signal peptide occupies residues 1-29 (MHVRSLRAAAPHSFVALWAPLFLLRSALA). Positions 30-291 (DFSLDNEVHS…ATEVHLRSIR (262 aa)) are excised as a propeptide. 4 N-linked (GlcNAc...) asparagine glycosylation sites follow: asparagine 186, asparagine 301, asparagine 320, and asparagine 371. The segment at 290–310 (IRSTGGKQRSQNRSKTPKNQE) is disordered. Cystine bridges form between cysteine 329-cysteine 395, cysteine 358-cysteine 427, and cysteine 362-cysteine 429.

Belongs to the TGF-beta family. In terms of assembly, homodimer; disulfide-linked. Interacts with SOSTDC1. Interacts with TWSG1. Interacts with FBN1 (via N-terminal domain) and FBN2. Interacts with type I receptor ACVR1. Interacts with type II receptor ACVR2A. Interacts with NOG; this interaction inhibits canonical BMP signaling. Interacts with SCUBE3. Interacts with ERFE; the interaction inhibits BMP-induced transcription of HAMP. Interacts with TGFBR3.

Its subcellular location is the secreted. Growth factor of the TGF-beta superfamily that plays important role in various biological processes, including embryogenesis, hematopoiesis, neurogenesis and skeletal morphogenesis. Initiates the canonical BMP signaling cascade by associating with type I receptor ACVR1 and type II receptor ACVR2A. Once all three components are bound together in a complex at the cell surface, ACVR2A phosphorylates and activates ACVR1. In turn, ACVR1 propagates signal by phosphorylating SMAD1/5/8 that travel to the nucleus and act as activators and repressors of transcription of target genes. For specific functions such as growth cone collapse in developing spinal neurons and chemotaxis of monocytes, also uses BMPR2 as type II receptor. Can also signal through non-canonical pathways such as P38 MAP kinase signaling cascade that promotes brown adipocyte differentiation through activation of target genes, including members of the SOX family of transcription factors. Promotes the expression of HAMP, this is repressed by its interaction with ERFE. This Mus musculus (Mouse) protein is Bone morphogenetic protein 7 (Bmp7).